The primary structure comprises 300 residues: Acetyl-coenzyme A carboxylase carboxyl transferase subunit beta 1 (300 aa).

Positions 26–294 (MWVKCPSCGD…HTSAAQHVPA (269 aa)) constitute a CoA carboxyltransferase N-terminal domain. The Zn(2+) site is built by cysteine 30, cysteine 33, cysteine 49, and cysteine 51. The segment at 30–51 (CPSCGDLIYTRQFSDNLKVCKC) adopts a C4-type zinc-finger fold.

It belongs to the AccD/PCCB family. As to quaternary structure, acetyl-CoA carboxylase is a heterohexamer composed of biotin carboxyl carrier protein (AccB), biotin carboxylase (AccC) and two subunits each of ACCase subunit alpha (AccA) and ACCase subunit beta (AccD). Zn(2+) is required as a cofactor.

The protein localises to the cytoplasm. It catalyses the reaction N(6)-carboxybiotinyl-L-lysyl-[protein] + acetyl-CoA = N(6)-biotinyl-L-lysyl-[protein] + malonyl-CoA. It participates in lipid metabolism; malonyl-CoA biosynthesis; malonyl-CoA from acetyl-CoA: step 1/1. Functionally, component of the acetyl coenzyme A carboxylase (ACC) complex. Biotin carboxylase (BC) catalyzes the carboxylation of biotin on its carrier protein (BCCP) and then the CO(2) group is transferred by the transcarboxylase to acetyl-CoA to form malonyl-CoA. The chain is Acetyl-coenzyme A carboxylase carboxyl transferase subunit beta 1 from Roseiflexus sp. (strain RS-1).